Consider the following 620-residue polypeptide: Dihydroxy-acid dehydratase (620 aa).

Aspartate 82 provides a ligand contact to Mg(2+). Cysteine 123 is a binding site for [2Fe-2S] cluster. Aspartate 124 and lysine 125 together coordinate Mg(2+). Residue lysine 125 is modified to N6-carboxylysine. Cysteine 197 is a [2Fe-2S] cluster binding site. Residue glutamate 493 coordinates Mg(2+). Catalysis depends on serine 519, which acts as the Proton acceptor.

Belongs to the IlvD/Edd family. Homodimer. [2Fe-2S] cluster serves as cofactor. Requires Mg(2+) as cofactor.

It carries out the reaction (2R)-2,3-dihydroxy-3-methylbutanoate = 3-methyl-2-oxobutanoate + H2O. The enzyme catalyses (2R,3R)-2,3-dihydroxy-3-methylpentanoate = (S)-3-methyl-2-oxopentanoate + H2O. It functions in the pathway amino-acid biosynthesis; L-isoleucine biosynthesis; L-isoleucine from 2-oxobutanoate: step 3/4. Its pathway is amino-acid biosynthesis; L-valine biosynthesis; L-valine from pyruvate: step 3/4. Functionally, functions in the biosynthesis of branched-chain amino acids. Catalyzes the dehydration of (2R,3R)-2,3-dihydroxy-3-methylpentanoate (2,3-dihydroxy-3-methylvalerate) into 2-oxo-3-methylpentanoate (2-oxo-3-methylvalerate) and of (2R)-2,3-dihydroxy-3-methylbutanoate (2,3-dihydroxyisovalerate) into 2-oxo-3-methylbutanoate (2-oxoisovalerate), the penultimate precursor to L-isoleucine and L-valine, respectively. This chain is Dihydroxy-acid dehydratase, found in Bifidobacterium longum subsp. infantis (strain ATCC 15697 / DSM 20088 / JCM 1222 / NCTC 11817 / S12).